We begin with the raw amino-acid sequence, 256 residues long: MTKRIRLGVNIDHVATIRNARGGIHPDPVRAAQLAAHAGADGITTHLREDRRHISDDDLINLEKGITLPLNLEMAATEEMLEIALQHRPHAVCLVPEKREEQTTEGGLDAAGQIDSLKPIVAKLLAAGIRVSLFIEPDETQIRAAKALNAPVIELHTGHYANSVNEELAAELIRIEQAAKLAKSLNIEVHAGHGLTYENVIPIAALEEIAELNIGHFLIGEAIFIGLEASIKRMRYLMDAARAEDKVDFLVKHIAL.

Residue Asn10 coordinates 3-amino-2-oxopropyl phosphate. 12–13 (DH) serves as a coordination point for 1-deoxy-D-xylulose 5-phosphate. Arg21 is a 3-amino-2-oxopropyl phosphate binding site. His46 serves as the catalytic Proton acceptor. 1-deoxy-D-xylulose 5-phosphate is bound by residues Arg48 and His53. The Proton acceptor role is filled by Glu73. Thr103 contacts 1-deoxy-D-xylulose 5-phosphate. The active-site Proton donor is the His193. Residues Gly194 and 215 to 216 (GH) each bind 3-amino-2-oxopropyl phosphate.

Belongs to the PNP synthase family. As to quaternary structure, homooctamer; tetramer of dimers.

The protein localises to the cytoplasm. The catalysed reaction is 3-amino-2-oxopropyl phosphate + 1-deoxy-D-xylulose 5-phosphate = pyridoxine 5'-phosphate + phosphate + 2 H2O + H(+). It participates in cofactor biosynthesis; pyridoxine 5'-phosphate biosynthesis; pyridoxine 5'-phosphate from D-erythrose 4-phosphate: step 5/5. Functionally, catalyzes the complicated ring closure reaction between the two acyclic compounds 1-deoxy-D-xylulose-5-phosphate (DXP) and 3-amino-2-oxopropyl phosphate (1-amino-acetone-3-phosphate or AAP) to form pyridoxine 5'-phosphate (PNP) and inorganic phosphate. The polypeptide is Pyridoxine 5'-phosphate synthase (Zymomonas mobilis subsp. mobilis (strain ATCC 31821 / ZM4 / CP4)).